We begin with the raw amino-acid sequence, 2197 residues long: Non-reducing polyketide synthase Preu6 (2197 aa).

The N-terminal acylcarrier protein transacylase domain (SAT) stretch occupies residues 14 to 253 (FFCPQSRAPP…HNPENAELAK (240 aa)). The Ketosynthase family 3 (KS3) domain occupies 375-797 (DDAIAITGAS…GSNAAVICVE (423 aa)). Residues C546, H681, and H720 each act as for beta-ketoacyl synthase activity in the active site. The tract at residues 901–1198 (LVFSGQNTNA…SKPDSQVFQS (298 aa)) is malonyl-CoA:ACP transacylase (MAT) domain. The active-site For acyl/malonyl transferase activity is the S988. Residues 1258–1282 (ATEASQASTTSDTIQSTPTQTVQSP) form a disordered region. A compositionally biased stretch (polar residues) spans 1260-1281 (EASQASTTSDTIQSTPTQTVQS). An N-terminal hotdog fold region spans residues 1276–1403 (TQTVQSPPKL…GRVILTESSV (128 aa)). Positions 1276–1576 (TQTVQSPPKL…FNKMEISKLA (301 aa)) constitute a PKS/mFAS DH domain. The tract at residues 1284–1575 (KLISRLASLQ…RFNKMEISKL (292 aa)) is product template (PT) domain. The Proton acceptor; for dehydratase activity role is filled by H1310. Positions 1424–1576 (AEKLMSSRAY…FNKMEISKLA (153 aa)) are C-terminal hotdog fold. The active-site Proton donor; for dehydratase activity is the D1487. The segment covering 1581 to 1591 (SVNASSPTGGR) has biased composition (polar residues). Positions 1581–1614 (SVNASSPTGGRTQPPAAPKTQAQPMASRPSPTPL) are disordered. Carrier domains follow at residues 1639–1719 (NDIG…SQKM) and 1748–1824 (NSIT…ATPP). O-(pantetheine 4'-phosphoryl)serine is present on residues S1673 and S1782. A disordered region spans residues 1817–1841 (LGASATPPSTTGSSTPGDISTAATT). Over residues 1818–1833 (GASATPPSTTGSSTPG) the composition is skewed to low complexity. The tract at residues 1870–2197 (DSYQVKTVEY…PGLDFLIQNA (328 aa)) is thioesterase (TE) domain. Active-site for thioesterase activity residues include S1990 and D2137.

Requires pantetheine 4'-phosphate as cofactor.

It carries out the reaction 6 malonyl-CoA + 2 acetyl-CoA + 5 H(+) = o-orsellinate depside + 6 CO2 + 8 CoA + H2O. Its function is as follows. Non-reducing polyketide synthase; part of a gene cluster that mediates the biosynthesis of a yet unidentified natural product. The first step in the pathway is performed by Preu6 that condenses 2 acetyl-CoA starter units with 6 malonyl-CoA units to produce lecanoric acid (LA), also known as orsellinate depside, an intermediate that has significant antifungal activity against the plant pathogen Botryosphaeria berengeriana. The biosynthesis probably occurs via the formation of 2 orsellinate intermediates fused together by the C-terminal thioesterase (TE) domain that finally releases lecanoric acid. In Preussia isomera (Coprophilous fungus), this protein is Non-reducing polyketide synthase Preu6.